Reading from the N-terminus, the 817-residue chain is ABC transporter G family member STR (817 aa).

Positions 1 to 30 (MARLERDGTNKSLESLMDSHKPGGTTTNLN) are disordered. Residues 1–542 (MARLERDGTN…RTVLNVIRTP (542 aa)) lie on the Cytoplasmic side of the membrane. The region spanning 43–294 (LEFTNLSYSI…LSGFGRPVPD (252 aa)) is the ABC transporter domain. ATP is bound at residue 87 to 94 (GPSGAGKS). 3 disordered regions span residues 321 to 349 (QYQH…RRNT), 362 to 395 (GFTA…LERR), and 439 to 463 (RPPS…GPRS). The segment covering 362 to 375 (GFTAGTPQPDSSQF) has biased composition (polar residues). The segment covering 377 to 388 (LDDDDNDDDENF) has biased composition (acidic residues). Residues 543 to 563 (ELFASREIVLTVMALVLSTIF) traverse the membrane as a helical segment. Residues 564-579 (KNLGDTTFIDINRLLN) lie on the Extracellular side of the membrane. A helical membrane pass occupies residues 580 to 600 (FYIFAVCLVFFSSNDAVPSFI). At 601–621 (MERFIFIRETSHNAYRASSYV) the chain is on the cytoplasmic side. A helical transmembrane segment spans residues 622–642 (ISSLIVYLPFFAVQGLTFAVI). Over 643-657 (TKLMLHLKSNLFNFW) the chain is Extracellular. The chain crosses the membrane as a helical span at residues 658–678 (MILFASLITTNAYVMLVSALV). The Cytoplasmic segment spans residues 679–681 (PSY). The chain crosses the membrane as a helical span at residues 682 to 702 (ITGYAVVIATTALFFLTCGFF). Residues 703–787 (LKRTQIPAYW…TMDITMESLW (85 aa)) lie on the Extracellular side of the membrane. Residue Asn-762 is glycosylated (N-linked (GlcNAc...) asparagine). Residues 788–808 (YDILILLAWGVLYRFFFYLVL) traverse the membrane as a helical segment. Topologically, residues 809-817 (RFYSKNERK) are cytoplasmic.

The protein belongs to the ABC transporter superfamily. ABCG family. Stunted arbuscule (STR) subfamily. As to quaternary structure, heterodimerizes with STR2; the resulting transporter is located in the peri-arbuscular membrane. As to expression, expressed constitutively in the vascular tissue of roots.

The protein resides in the cell membrane. Together with STR2, required for arbuscule development in arbuscular mycorrhizal (AM) symbiosis. The sequence is that of ABC transporter G family member STR from Medicago truncatula (Barrel medic).